Reading from the N-terminus, the 111-residue chain is Large ribosomal subunit protein uL24 (111 aa).

This sequence belongs to the universal ribosomal protein uL24 family. Part of the 50S ribosomal subunit.

One of two assembly initiator proteins, it binds directly to the 5'-end of the 23S rRNA, where it nucleates assembly of the 50S subunit. Functionally, one of the proteins that surrounds the polypeptide exit tunnel on the outside of the subunit. The protein is Large ribosomal subunit protein uL24 of Chlamydia trachomatis serovar A (strain ATCC VR-571B / DSM 19440 / HAR-13).